The primary structure comprises 290 residues: Dehydrodolichyl diphosphate synthase CPT3 (290 aa).

Aspartate 42 is a catalytic residue.

Belongs to the UPP synthase family. Requires Mg(2+) as cofactor. As to expression, expressed in leaf trichomes and stem trichomes. Expressed at low levels in young leaves, stems and old leaves.

The protein localises to the cytoplasm. The protein resides in the cytosol. The catalysed reaction is n isopentenyl diphosphate + (2E,6E)-farnesyl diphosphate = a di-trans,poly-cis-polyprenyl diphosphate + n diphosphate. Catalyzes cis-prenyl chain elongation to produce the polyprenyl backbone of dolichol, a glycosyl carrier-lipid required for the biosynthesis of several classes of glycoprotein. The polypeptide is Dehydrodolichyl diphosphate synthase CPT3 (Solanum lycopersicum (Tomato)).